The primary structure comprises 183 residues: Dual-action ribosomal maturation protein DarP (183 aa).

A disordered region spans residues 1-27 (MSSHSQEPVGEENFDDSEYDRPNKSQV). A compositionally biased stretch (acidic residues) spans 9 to 18 (VGEENFDDSE).

Belongs to the DarP family.

The protein localises to the cytoplasm. Functionally, member of a network of 50S ribosomal subunit biogenesis factors which assembles along the 30S-50S interface, preventing incorrect 23S rRNA structures from forming. Promotes peptidyl transferase center (PTC) maturation. The chain is Dual-action ribosomal maturation protein DarP from Bordetella pertussis (strain Tohama I / ATCC BAA-589 / NCTC 13251).